Here is a 307-residue protein sequence, read N- to C-terminus: Alpha N-terminal protein methyltransferase 1 (307 aa).

Low complexity predominate over residues 38 to 54; sequence EPAPAPAAGSNGVAGEQ. Residues 38 to 60 form a disordered region; it reads EPAPAPAAGSNGVAGEQEAGGGG. Residues glycine 123, arginine 128, 145-147, 179-180, and glutamine 195 each bind S-adenosyl-L-methionine; these read EPV and LQ.

The protein belongs to the methyltransferase superfamily. NTM1 family.

It catalyses the reaction N-terminal L-alanyl-L-prolyl-L-lysyl-[protein] + 3 S-adenosyl-L-methionine = N-terminal N,N,N-trimethyl-L-alanyl-L-prolyl-L-lysyl-[protein] + 3 S-adenosyl-L-homocysteine + 3 H(+). It carries out the reaction N-terminal L-seryl-L-prolyl-L-lysyl-[protein] + 3 S-adenosyl-L-methionine = N-terminal N,N,N-trimethyl-L-seryl-L-prolyl-L-lysyl-[protein] + 3 S-adenosyl-L-homocysteine + 3 H(+). The enzyme catalyses N-terminal L-prolyl-L-prolyl-L-lysyl-[protein] + 2 S-adenosyl-L-methionine = N-terminal N,N-dimethyl-L-prolyl-L-prolyl-L-lysyl-[protein] + 2 S-adenosyl-L-homocysteine + 2 H(+). Its function is as follows. Alpha-N-methyltransferase that methylates the N-terminus of target proteins containing the N-terminal motif [Ala/Pro/Ser]-Pro-Lys when the initiator Met is cleaved. Specifically catalyzes mono-, di- or tri-methylation of exposed alpha-amino group of Ala or Ser residue in the [Ala/Ser]-Pro-Lys motif and mono- or di-methylation of Pro in the Pro-Pro-Lys motif. The protein is Alpha N-terminal protein methyltransferase 1 of Oryza sativa subsp. indica (Rice).